Here is a 206-residue protein sequence, read N- to C-terminus: Small ribosomal subunit protein uS4 (206 aa).

Residues 28–48 form a disordered region; sequence YMERRPYGPGEHGRARKKQDS. The S4 RNA-binding domain occupies 95 to 160; sequence MRLDALVLRA…MPPFQVAAAG (66 aa).

It belongs to the universal ribosomal protein uS4 family. In terms of assembly, part of the 30S ribosomal subunit. Contacts protein S5. The interaction surface between S4 and S5 is involved in control of translational fidelity.

Its function is as follows. One of the primary rRNA binding proteins, it binds directly to 16S rRNA where it nucleates assembly of the body of the 30S subunit. Functionally, with S5 and S12 plays an important role in translational accuracy. The polypeptide is Small ribosomal subunit protein uS4 (Paenarthrobacter aurescens (strain TC1)).